Reading from the N-terminus, the 85-residue chain is Small ribosomal subunit protein uS17 (85 aa).

The protein belongs to the universal ribosomal protein uS17 family. As to quaternary structure, part of the 30S ribosomal subunit.

Functionally, one of the primary rRNA binding proteins, it binds specifically to the 5'-end of 16S ribosomal RNA. The sequence is that of Small ribosomal subunit protein uS17 from Natranaerobius thermophilus (strain ATCC BAA-1301 / DSM 18059 / JW/NM-WN-LF).